Here is a 325-residue protein sequence, read N- to C-terminus: MKNFKYFAQSYVDWVIRLGRLRFSLLGVMILAVLALCTQILFSLFIVHQISWVDIFRSVTFGLLTAPFVIYFFTLLVEKLEHSRLDLSSSVNRLENEVAERIAAQKKLSQALEKLEKNSRDKSTLLATISHEFRTPLNGIVGLSQILLDDELDDLQRNYLKTINISAVSLGYIFSDIIDLEKIDASRIELNRQPTDFPALLNDIYNFASFLAKEKNLIFSLELEPNLPNWLNLDRVRLSQILWNLISNAVKFTDQGNIILKIMRNQDCYHFIVKDTGMGISPEEQKHIFEMYYQVKESRQQSAGSGIGLAISKNLAQLMGRGFNS.

Residues 1 to 26 lie on the Cytoplasmic side of the membrane; sequence MKNFKYFAQSYVDWVIRLGRLRFSLL. The chain crosses the membrane as a helical span at residues 27-47; that stretch reads GVMILAVLALCTQILFSLFIV. Over 48–57 the chain is Periplasmic; sequence HQISWVDIFR. The chain crosses the membrane as a helical span at residues 58-78; it reads SVTFGLLTAPFVIYFFTLLVE. Residues 79 to 325 lie on the Cytoplasmic side of the membrane; sequence KLEHSRLDLS…AQLMGRGFNS (247 aa). The 198-residue stretch at 128–325 folds into the Histidine kinase domain; sequence TISHEFRTPL…AQLMGRGFNS (198 aa). Residue H131 is modified to Phosphohistidine; by autocatalysis.

It localises to the cell inner membrane. It catalyses the reaction ATP + protein L-histidine = ADP + protein N-phospho-L-histidine.. Its function is as follows. Member of the two-component regulatory system ArcB/ArcA. Activates ArcA by phosphorylation. This Haemophilus influenzae (strain ATCC 51907 / DSM 11121 / KW20 / Rd) protein is Aerobic respiration control sensor protein ArcB homolog (arcB).